A 166-amino-acid chain; its full sequence is Phosphopantetheine adenylyltransferase (166 aa).

S9 is a substrate binding site. Residues 9-10 (SF) and H17 each bind ATP. 3 residues coordinate substrate: K41, T74, and R88. Residues 89-91 (GLR), E99, and 124-130 (DSFISSS) each bind ATP.

Belongs to the bacterial CoaD family. As to quaternary structure, homohexamer. It depends on Mg(2+) as a cofactor.

It localises to the cytoplasm. The enzyme catalyses (R)-4'-phosphopantetheine + ATP + H(+) = 3'-dephospho-CoA + diphosphate. It participates in cofactor biosynthesis; coenzyme A biosynthesis; CoA from (R)-pantothenate: step 4/5. Functionally, reversibly transfers an adenylyl group from ATP to 4'-phosphopantetheine, yielding dephospho-CoA (dPCoA) and pyrophosphate. In Lactobacillus gasseri (strain ATCC 33323 / DSM 20243 / BCRC 14619 / CIP 102991 / JCM 1131 / KCTC 3163 / NCIMB 11718 / NCTC 13722 / AM63), this protein is Phosphopantetheine adenylyltransferase.